A 636-amino-acid chain; its full sequence is Probable potassium transport system protein Kup (636 aa).

A run of 12 helical transmembrane segments spans residues 22-42, 64-84, 115-135, 150-170, 182-202, 220-240, 261-281, 293-313, 351-371, 383-403, 408-428, and 433-453; these read LGLLVAAVGVVYGDIGTSPLY, ILSLILWSLLWVVSFKYVMFI, LMVICGLIGASLFYGDSMITP, FDGIDHWVVPISLVVLVALFL, LFGPIMVTWFVVLGALGVHGI, FFVVHPGMGVAILGAVVLALT, WFILVLPALVLNYFGQGALLL, LLAPSWALLPLVGLATMATVI, IYIGAVNWTLMVGVVLLVIGF, VAVTGTMLMTTILVSAVMLLL, PVLAVPLLMGFLFVDGLFFAA, and IVQGGAFPVLAGGVLFLLMST.

Belongs to the HAK/KUP transporter (TC 2.A.72) family.

It is found in the cell inner membrane. It catalyses the reaction K(+)(in) + H(+)(in) = K(+)(out) + H(+)(out). In terms of biological role, transport of potassium into the cell. Likely operates as a K(+):H(+) symporter. This chain is Probable potassium transport system protein Kup, found in Pseudomonas putida (strain GB-1).